Here is a 376-residue protein sequence, read N- to C-terminus: Alkanesulfonate monooxygenase (376 aa).

Belongs to the SsuD family.

It carries out the reaction an alkanesulfonate + FMNH2 + O2 = an aldehyde + FMN + sulfite + H2O + 2 H(+). In terms of biological role, catalyzes the desulfonation of aliphatic sulfonates. This is Alkanesulfonate monooxygenase from Bacillus licheniformis (strain ATCC 14580 / DSM 13 / JCM 2505 / CCUG 7422 / NBRC 12200 / NCIMB 9375 / NCTC 10341 / NRRL NRS-1264 / Gibson 46).